A 298-amino-acid chain; its full sequence is 1D-myo-inositol 2-acetamido-2-deoxy-alpha-D-glucopyranoside deacetylase (298 aa).

Zn(2+) contacts are provided by His14, Asp17, and His148. Residues 277–298 (RGPAGPDGREHDLFAGLDGPAT) form a disordered region.

This sequence belongs to the MshB deacetylase family. It depends on Zn(2+) as a cofactor.

The enzyme catalyses 1D-myo-inositol 2-acetamido-2-deoxy-alpha-D-glucopyranoside + H2O = 1D-myo-inositol 2-amino-2-deoxy-alpha-D-glucopyranoside + acetate. Functionally, catalyzes the deacetylation of 1D-myo-inositol 2-acetamido-2-deoxy-alpha-D-glucopyranoside (GlcNAc-Ins) in the mycothiol biosynthesis pathway. The protein is 1D-myo-inositol 2-acetamido-2-deoxy-alpha-D-glucopyranoside deacetylase of Nocardia farcinica (strain IFM 10152).